We begin with the raw amino-acid sequence, 468 residues long: SVGFKAGVKEYKLTYYTPEYETKETDILAAFRVTPQPGVPPEEAGAAVAAESSTGTWTTVWTDGLTSLDRYKGRCYHIEPVAGEEDQYIAYVAYPLDLFEEGSVTNMFTSIVGNVFGFKALRALRLEDLRIPISYVKTFQGPPHGIQVERDKLNKYGRPLLGCTIKPKLGLSAKNYGRAVYECLRGGLDFTKDDENVNSQPFMRWRDRFLFCAEAIFKSQAETGEIKGHYLNATAGTCEEMMKRAIFARELGVPIVMHDYLTGGFTANTSLAHYCRDNGLLLHIHRAMHAXIDRQKNHGIHFRVLAKALRMSGGDHIHSGTVVGKLEGERDITLGFVDLLRDDYIEKDRARGIYFTQDWVSLPGVLPVASGGIHVWHMPALTEIFGDDSVLQFGGGTLGHPWGNAPGAVANRVALEACVKXRNEGRDLATEGNEIIREATKWSPELAAACEVWKEITXNFAAVDTLDP.

K5 is modified (N6,N6,N6-trimethyllysine). Residues N114 and T164 each contribute to the substrate site. The active-site Proton acceptor is K166. Residue K168 participates in substrate binding. 3 residues coordinate Mg(2+): K192, D194, and E195. Position 192 is an N6-carboxylysine (K192). H285 (proton acceptor) is an active-site residue. Residues R286, H318, and S370 each contribute to the substrate site.

Belongs to the RuBisCO large chain family. Type I subfamily. As to quaternary structure, heterohexadecamer of 8 large chains and 8 small chains; disulfide-linked. The disulfide link is formed within the large subunit homodimers. Requires Mg(2+) as cofactor. In terms of processing, the disulfide bond which can form in the large chain dimeric partners within the hexadecamer appears to be associated with oxidative stress and protein turnover.

It localises to the plastid. The protein resides in the chloroplast. The enzyme catalyses 2 (2R)-3-phosphoglycerate + 2 H(+) = D-ribulose 1,5-bisphosphate + CO2 + H2O. The catalysed reaction is D-ribulose 1,5-bisphosphate + O2 = 2-phosphoglycolate + (2R)-3-phosphoglycerate + 2 H(+). Its function is as follows. RuBisCO catalyzes two reactions: the carboxylation of D-ribulose 1,5-bisphosphate, the primary event in carbon dioxide fixation, as well as the oxidative fragmentation of the pentose substrate in the photorespiration process. Both reactions occur simultaneously and in competition at the same active site. The sequence is that of Ribulose bisphosphate carboxylase large chain from Anthospermum herbaceum.